The primary structure comprises 340 residues: 2-deoxy-scyllo-inosamine dehydrogenase (340 aa).

Residues Cys-37, His-59, Cys-89, Cys-92, Cys-95, Cys-103, and Glu-144 each coordinate Zn(2+).

Belongs to the zinc-containing alcohol dehydrogenase family. DOIA dehydrogenase subfamily. It depends on Zn(2+) as a cofactor.

It catalyses the reaction 2-deoxy-scyllo-inosamine + NADP(+) = 3-amino-2,3-dideoxy-scyllo-inosose + NADPH + H(+). The catalysed reaction is 2-deoxy-scyllo-inosamine + NAD(+) = 3-amino-2,3-dideoxy-scyllo-inosose + NADH + H(+). The protein operates within metabolic intermediate biosynthesis; 2-deoxystreptamine biosynthesis; 2-deoxystreptamine from D-glucose 6-phosphate: step 3/4. It participates in antibiotic biosynthesis; neomycin biosynthesis. Functionally, catalyzes the oxidation of 2-deoxy-scyllo-inosamine (DOIA) with NAD(+) or NADP(+), forming 3-amino-2,3-dideoxy-scyllo-inosose (amino-DOI). The chain is 2-deoxy-scyllo-inosamine dehydrogenase (neoA) from Streptomyces fradiae (Streptomyces roseoflavus).